A 907-amino-acid polypeptide reads, in one-letter code: Protein translocase subunit SecA (907 aa).

Residues Gln87, 105 to 109, and Asp512 contribute to the ATP site; that span reads GEGKT. Residues 834–907 are disordered; it reads QEDVERMEEQ…KKYKQCHGKI (74 aa). Composition is skewed to basic and acidic residues over residues 836–853 and 873–888; these read DVERMEEQRRLQAEEAAR and EEAHSPMVREERKVGR. Residues Cys892, Cys894, Cys903, and His904 each coordinate Zn(2+). The segment covering 898 to 907 has biased composition (basic residues); the sequence is KKYKQCHGKI.

This sequence belongs to the SecA family. As to quaternary structure, monomer and homodimer. Part of the essential Sec protein translocation apparatus which comprises SecA, SecYEG and auxiliary proteins SecDF-YajC and YidC. Zn(2+) is required as a cofactor.

Its subcellular location is the cell inner membrane. The protein resides in the cytoplasm. It catalyses the reaction ATP + H2O + cellular proteinSide 1 = ADP + phosphate + cellular proteinSide 2.. Part of the Sec protein translocase complex. Interacts with the SecYEG preprotein conducting channel. Has a central role in coupling the hydrolysis of ATP to the transfer of proteins into and across the cell membrane, serving both as a receptor for the preprotein-SecB complex and as an ATP-driven molecular motor driving the stepwise translocation of polypeptide chains across the membrane. This Aliivibrio fischeri (strain ATCC 700601 / ES114) (Vibrio fischeri) protein is Protein translocase subunit SecA.